The sequence spans 235 residues: MPEGVPCGRRGAMLNVGLTGSISCGKSTVARMLEGKGAFIIDFDRLAHDVEEPDKPAWRGIVDTFGPDVLREDRTIDRARLGTLVFADRRKLEKLNEIVHPAVFEAWRRSVEEIRGVRPDAIVVSDFPLLIELGKQNDYDVILLVYIPPQEQIRRLILRNGYSPEEAIQRVNSQMSIEDKIDFADIIVNNAGPREQTQAQIDKIWTQLLKKERLQRKSAASSFQTGTIHKEREVG.

The 205-residue stretch at 15–219 folds into the DPCK domain; that stretch reads NVGLTGSISC…KKERLQRKSA (205 aa). 23-28 is an ATP binding site; it reads SCGKST.

This sequence belongs to the CoaE family.

Its subcellular location is the cytoplasm. It catalyses the reaction 3'-dephospho-CoA + ATP = ADP + CoA + H(+). Its pathway is cofactor biosynthesis; coenzyme A biosynthesis; CoA from (R)-pantothenate: step 5/5. Catalyzes the phosphorylation of the 3'-hydroxyl group of dephosphocoenzyme A to form coenzyme A. The chain is Dephospho-CoA kinase from Syntrophus aciditrophicus (strain SB).